The sequence spans 155 residues: Ribosomal RNA large subunit methyltransferase H (155 aa).

Residues Leu-72, Gly-103, and 122-127 each bind S-adenosyl-L-methionine; that span reads LSDLTL.

This sequence belongs to the RNA methyltransferase RlmH family. As to quaternary structure, homodimer.

It localises to the cytoplasm. It catalyses the reaction pseudouridine(1915) in 23S rRNA + S-adenosyl-L-methionine = N(3)-methylpseudouridine(1915) in 23S rRNA + S-adenosyl-L-homocysteine + H(+). Its function is as follows. Specifically methylates the pseudouridine at position 1915 (m3Psi1915) in 23S rRNA. This chain is Ribosomal RNA large subunit methyltransferase H, found in Acidovorax sp. (strain JS42).